The chain runs to 374 residues: Peptide chain release factor 2 (374 aa).

N5-methylglutamine is present on Q250.

The protein belongs to the prokaryotic/mitochondrial release factor family. In terms of processing, methylated by PrmC. Methylation increases the termination efficiency of RF2.

It is found in the cytoplasm. Its function is as follows. Peptide chain release factor 2 directs the termination of translation in response to the peptide chain termination codons UGA and UAA. The protein is Peptide chain release factor 2 of Beutenbergia cavernae (strain ATCC BAA-8 / DSM 12333 / CCUG 43141 / JCM 11478 / NBRC 16432 / NCIMB 13614 / HKI 0122).